Consider the following 162-residue polypeptide: NADH-quinone oxidoreductase subunit I (162 aa).

2 consecutive 4Fe-4S ferredoxin-type domains span residues 53 to 83 and 93 to 122; these read LRRY…IEAE and TRYD…EGPN. Residues Cys63, Cys66, Cys69, Cys73, Cys102, Cys105, Cys108, and Cys112 each coordinate [4Fe-4S] cluster.

This sequence belongs to the complex I 23 kDa subunit family. NDH-1 is composed of 14 different subunits. Subunits NuoA, H, J, K, L, M, N constitute the membrane sector of the complex. Requires [4Fe-4S] cluster as cofactor.

It is found in the cell inner membrane. It carries out the reaction a quinone + NADH + 5 H(+)(in) = a quinol + NAD(+) + 4 H(+)(out). Its function is as follows. NDH-1 shuttles electrons from NADH, via FMN and iron-sulfur (Fe-S) centers, to quinones in the respiratory chain. The immediate electron acceptor for the enzyme in this species is believed to be ubiquinone. Couples the redox reaction to proton translocation (for every two electrons transferred, four hydrogen ions are translocated across the cytoplasmic membrane), and thus conserves the redox energy in a proton gradient. The protein is NADH-quinone oxidoreductase subunit I of Rhodospirillum centenum (strain ATCC 51521 / SW).